Consider the following 441-residue polypeptide: ATP-dependent RNA helicase SUB2-1 (441 aa).

Residues 1-19 (MSHEGEEDLLEYSDNEQDI) are compositionally biased toward acidic residues. Positions 1–46 (MSHEGEEDLLEYSDNEQDIQVDASKAAEPSELDATTAEDASNGDAE) are disordered. The short motif at 57–85 (TGFKDFLLKPELARAIIDCGFEHPSEVQQ) is the Q motif element. The 176-residue stretch at 88–263 (IPQSIHGTDV…RRFLQNPLEI (176 aa)) folds into the Helicase ATP-binding domain. ATP is bound at residue 101 to 108 (AKSGLGKT). Positions 210–213 (DECD) match the DECD box motif. Residues 291–436 (KLAQLLDDLE…EFPEEGIDPS (146 aa)) form the Helicase C-terminal domain.

It belongs to the DEAD box helicase family. DECD subfamily.

The protein resides in the nucleus. The enzyme catalyses ATP + H2O = ADP + phosphate + H(+). Functionally, ATP-binding RNA helicase involved in transcription elongation and required for the export of mRNA out of the nucleus. SUB2 also plays a role in pre-mRNA splicing and spliceosome assembly. May be involved in rDNA and telomeric silencing, and maintenance of genome integrity. This Vanderwaltozyma polyspora (strain ATCC 22028 / DSM 70294 / BCRC 21397 / CBS 2163 / NBRC 10782 / NRRL Y-8283 / UCD 57-17) (Kluyveromyces polysporus) protein is ATP-dependent RNA helicase SUB2-1 (SUB2-1).